The following is a 466-amino-acid chain: Cysteine--tRNA ligase (466 aa).

C29 is a binding site for Zn(2+). The 'HIGH' region signature appears at 31-41 (PTVYNYIHIGN). Residues C209, H234, and E238 each contribute to the Zn(2+) site. Positions 266 to 270 (KMSKS) match the 'KMSKS' region motif. An ATP-binding site is contributed by K269. S270 carries the phosphoserine modification.

This sequence belongs to the class-I aminoacyl-tRNA synthetase family. As to quaternary structure, monomer. The cofactor is Zn(2+).

Its subcellular location is the cytoplasm. It carries out the reaction tRNA(Cys) + L-cysteine + ATP = L-cysteinyl-tRNA(Cys) + AMP + diphosphate. The protein is Cysteine--tRNA ligase of Bacillus pumilus (strain SAFR-032).